We begin with the raw amino-acid sequence, 398 residues long: Argininosuccinate synthase (398 aa).

An ATP-binding site is contributed by 8–16; the sequence is AYSGGLDTS. Residue Tyr87 coordinates L-citrulline. Residue Gly117 coordinates ATP. L-aspartate-binding residues include Thr119, Asn123, and Asp124. Asn123 is a binding site for L-citrulline. Positions 127, 175, 260, and 272 each coordinate L-citrulline.

Belongs to the argininosuccinate synthase family. Type 1 subfamily. In terms of assembly, homotetramer.

It is found in the cytoplasm. The catalysed reaction is L-citrulline + L-aspartate + ATP = 2-(N(omega)-L-arginino)succinate + AMP + diphosphate + H(+). The protein operates within amino-acid biosynthesis; L-arginine biosynthesis; L-arginine from L-ornithine and carbamoyl phosphate: step 2/3. This is Argininosuccinate synthase from Mycobacterium ulcerans (strain Agy99).